Reading from the N-terminus, the 143-residue chain is Nucleoside diphosphate kinase (143 aa).

6 residues coordinate ATP: Lys-11, Phe-59, Arg-87, Thr-93, Arg-104, and Asn-114. Catalysis depends on His-117, which acts as the Pros-phosphohistidine intermediate.

The protein belongs to the NDK family. As to quaternary structure, homotetramer. Mg(2+) serves as cofactor.

The protein localises to the cytoplasm. It carries out the reaction a 2'-deoxyribonucleoside 5'-diphosphate + ATP = a 2'-deoxyribonucleoside 5'-triphosphate + ADP. It catalyses the reaction a ribonucleoside 5'-diphosphate + ATP = a ribonucleoside 5'-triphosphate + ADP. Major role in the synthesis of nucleoside triphosphates other than ATP. The ATP gamma phosphate is transferred to the NDP beta phosphate via a ping-pong mechanism, using a phosphorylated active-site intermediate. This Clostridium perfringens (strain SM101 / Type A) protein is Nucleoside diphosphate kinase.